The primary structure comprises 350 residues: tRNA uridine(34) hydroxylase (350 aa).

Positions 146 to 240 (DDPDAVFIDM…YARRAREQGL (95 aa)) constitute a Rhodanese domain. Residue cysteine 200 is the Cysteine persulfide intermediate of the active site. Residues 319-328 (RRRRAGRENG) show a composition bias toward basic and acidic residues. The segment at 319–350 (RRRRAGRENGNKIFNKSRGRLNSKLSIPDPAE) is disordered.

It belongs to the TrhO family.

The catalysed reaction is uridine(34) in tRNA + AH2 + O2 = 5-hydroxyuridine(34) in tRNA + A + H2O. Catalyzes oxygen-dependent 5-hydroxyuridine (ho5U) modification at position 34 in tRNAs. The protein is tRNA uridine(34) hydroxylase of Salmonella gallinarum (strain 287/91 / NCTC 13346).